We begin with the raw amino-acid sequence, 606 residues long: Glutamine--fructose-6-phosphate aminotransferase [isomerizing] (606 aa).

Cys2 (nucleophile; for GATase activity) is an active-site residue. One can recognise a Glutamine amidotransferase type-2 domain in the interval 2-218 (CGIFGYLGEK…SGELAVLRIG (217 aa)). SIS domains follow at residues 278–424 (FTES…HRQV) and 448–596 (LDSS…VDRP). Catalysis depends on Lys601, which acts as the For Fru-6P isomerization activity.

Homodimer.

It localises to the cytoplasm. The catalysed reaction is D-fructose 6-phosphate + L-glutamine = D-glucosamine 6-phosphate + L-glutamate. Functionally, catalyzes the first step in hexosamine metabolism, converting fructose-6P into glucosamine-6P using glutamine as a nitrogen source. The chain is Glutamine--fructose-6-phosphate aminotransferase [isomerizing] from Chlamydia trachomatis serovar D (strain ATCC VR-885 / DSM 19411 / UW-3/Cx).